The chain runs to 633 residues: Pollen receptor-like kinase 3 (633 aa).

Residues 1–19 (MTAVLFLCFLLICFSFTPS) form the signal peptide. Asparagine 22 and asparagine 37 each carry an N-linked (GlcNAc...) asparagine glycan. Cysteine 53 and cysteine 62 are joined by a disulfide. LRR repeat units follow at residues 90-115 (LPNLRTIRLDNNLLSGPLPPFFKLPG), 117-137 (KSLLLSNNSFSGEIADDFFKE), 138-162 (TPQLKRVFLDNNRLSGKIPASLMQL), 163-186 (AGLEELHMQGNQFTGEIPPLTDGN), and 188-210 (VLKSLDLSNNDLEGEIPITISDR). Residue asparagine 123 is glycosylated (N-linked (GlcNAc...) asparagine). Cysteine 224 and cysteine 232 are oxidised to a cystine. An N-linked (GlcNAc...) asparagine glycan is attached at asparagine 246. Residues 249–269 (AKAIFMVILFLLIFLFVVAII) form a helical membrane-spanning segment. Over residues 294–314 (VEVRVPDSIKKPIDSSKKRSN) the composition is skewed to basic and acidic residues. Positions 294 to 339 (VEVRVPDSIKKPIDSSKKRSNAEGSSKKGSSHNGKGAGGGPGSGMG) are disordered. Gly residues predominate over residues 328–338 (KGAGGGPGSGM). The Protein kinase domain occupies 358–633 (KAAAEVLGNG…IVRRIERVTL (276 aa)). Residues 364–372 (LGNGSLGSA) and lysine 386 contribute to the ATP site. Position 438 is a phosphoserine (serine 438). Threonine 458 is modified (phosphothreonine). Phosphoserine is present on serine 535.

It belongs to the protein kinase superfamily. Ser/Thr protein kinase family. Interacts in vitro with ROPGEF1 (via PRONE domain). Interacts with PRK6. Expressed in pollen and/or in flowers, but not in leaves.

It is found in the membrane. It catalyses the reaction L-seryl-[protein] + ATP = O-phospho-L-seryl-[protein] + ADP + H(+). The enzyme catalyses L-threonyl-[protein] + ATP = O-phospho-L-threonyl-[protein] + ADP + H(+). The phosphorylation activity is calcium-independent. Functionally, receptor-like kinase involved in the control of pollen germination and pollen tube polar growth. Can phosphorylate ROPGEF1 in vitro. The polypeptide is Pollen receptor-like kinase 3 (Arabidopsis thaliana (Mouse-ear cress)).